The primary structure comprises 217 residues: Coiled-coil domain-containing protein 124-A (217 aa).

The interval 1–128 (MPKKFQGENT…HLEMPLEENV (128 aa)) is disordered. 3 stretches are compositionally biased toward basic and acidic residues: residues 18–45 (RKAEAKAVSDGKRQKEIEDAYWQDDDKH), 52–74 (RKEDKEKKRLEQLERKKESQRLL), and 95–128 (TRAEIEETLCKEEEHKATTEKPKTHLEMPLEENV). The stretch at 46 to 82 (VARKGQRKEDKEKKRLEQLERKKESQRLLDEEDSKMK) forms a coiled coil.

Belongs to the CCDC124 family. As to quaternary structure, associates with translationally inactive ribosomes in the nonrotated state.

The protein resides in the cytoplasm. Its subcellular location is the cytoskeleton. The protein localises to the microtubule organizing center. It is found in the centrosome. It localises to the midbody. Ribosome-binding protein involved in ribosome hibernation: associates with translationally inactive ribosomes and stabilizes the nonrotated conformation of the 80S ribosome, thereby promoting ribosome preservation and storage. This Xenopus laevis (African clawed frog) protein is Coiled-coil domain-containing protein 124-A (ccdc124-a).